Consider the following 223-residue polypeptide: Neurotrophic factor BDNF precursor form (223 aa).

Positions 1–5 are cleaved as a signal peptide; it reads SCMKA. A propeptide spanning residues 6 to 114 is cleaved from the precursor; that stretch reads APMKEVSIRG…AANMSMRVRR (109 aa). Asparagine 107 carries an N-linked (GlcNAc...) asparagine glycan. Disulfide bonds link cysteine 127/cysteine 194 and cysteine 172/cysteine 223.

It belongs to the NGF-beta family.

The protein resides in the secreted. In terms of biological role, promotes the survival of neuronal populations that are all located either in the central nervous system or directly connected to it. This Candoia carinata (Papuan tree boa) protein is Neurotrophic factor BDNF precursor form (BDNF).